The primary structure comprises 220 residues: Cytidylate kinase (220 aa).

10 to 18 (GPAGAGKST) is a binding site for ATP.

It belongs to the cytidylate kinase family. Type 1 subfamily.

It localises to the cytoplasm. It catalyses the reaction CMP + ATP = CDP + ADP. The enzyme catalyses dCMP + ATP = dCDP + ADP. This chain is Cytidylate kinase, found in Alkaliphilus metalliredigens (strain QYMF).